The primary structure comprises 495 residues: Serine/threonine-protein kinase F (495 aa).

Positions 46–314 (YLPVKLLGQG…ASAEEVLAVL (269 aa)) constitute a Protein kinase domain. Residues 52–60 (LGQGGFGAA) and Lys77 contribute to the ATP site. The Proton acceptor role is filled by Asp187. The tract at residues 316 to 354 (GGKGNQGKAPPGATVSTPQGTNTQIQPTPASSASPLTAP) is disordered. Over residues 329–350 (TVSTPQGTNTQIQPTPASSASP) the composition is skewed to polar residues.

Belongs to the protein kinase superfamily. Ser/Thr protein kinase family.

It carries out the reaction L-seryl-[protein] + ATP = O-phospho-L-seryl-[protein] + ADP + H(+). The catalysed reaction is L-threonyl-[protein] + ATP = O-phospho-L-threonyl-[protein] + ADP + H(+). The sequence is that of Serine/threonine-protein kinase F (spkF) from Synechocystis sp. (strain ATCC 27184 / PCC 6803 / Kazusa).